The sequence spans 447 residues: Probable glycine dehydrogenase (decarboxylating) subunit 1 (447 aa).

This sequence belongs to the GcvP family. N-terminal subunit subfamily. In terms of assembly, the glycine cleavage system is composed of four proteins: P, T, L and H. In this organism, the P 'protein' is a heterodimer of two subunits.

The enzyme catalyses N(6)-[(R)-lipoyl]-L-lysyl-[glycine-cleavage complex H protein] + glycine + H(+) = N(6)-[(R)-S(8)-aminomethyldihydrolipoyl]-L-lysyl-[glycine-cleavage complex H protein] + CO2. Functionally, the glycine cleavage system catalyzes the degradation of glycine. The P protein binds the alpha-amino group of glycine through its pyridoxal phosphate cofactor; CO(2) is released and the remaining methylamine moiety is then transferred to the lipoamide cofactor of the H protein. The chain is Probable glycine dehydrogenase (decarboxylating) subunit 1 from Bacillus anthracis (strain A0248).